We begin with the raw amino-acid sequence, 295 residues long: Protease HtpX (295 aa).

A run of 2 helical transmembrane segments spans residues 4–24 and 34–54; these read IVLF…ILSL and GLMI…LLMS. His-139 contributes to the Zn(2+) binding site. Residue Glu-140 is part of the active site. His-143 is a binding site for Zn(2+). 2 helical membrane passes run 147 to 167 and 194 to 214; these read GDMV…IFIS and IVYM…ASII. Residue Glu-223 coordinates Zn(2+).

Belongs to the peptidase M48B family. The cofactor is Zn(2+).

The protein resides in the cell inner membrane. This Photorhabdus laumondii subsp. laumondii (strain DSM 15139 / CIP 105565 / TT01) (Photorhabdus luminescens subsp. laumondii) protein is Protease HtpX.